The primary structure comprises 96 residues: MNVLKEVYSTIEKRIQEKPEGSYVAKLTTDDKKTAVNKICEKVGEEAAEVILAAKDNDKAEIIYESADLIFHTMVLLAKSGITYEELSEEFKKRMK.

This sequence belongs to the PRA-PH family.

The protein resides in the cytoplasm. The catalysed reaction is 1-(5-phospho-beta-D-ribosyl)-ATP + H2O = 1-(5-phospho-beta-D-ribosyl)-5'-AMP + diphosphate + H(+). It participates in amino-acid biosynthesis; L-histidine biosynthesis; L-histidine from 5-phospho-alpha-D-ribose 1-diphosphate: step 2/9. This Methanococcus maripaludis (strain C6 / ATCC BAA-1332) protein is Phosphoribosyl-ATP pyrophosphatase.